Here is a 405-residue protein sequence, read N- to C-terminus: MVTVLIAGGGTGGHVFPMIAVGDAVRAAARDEEARVVYVGTARGIEVRVMGERGDNLELLHVLPLRGGGLSGFVRGAARAGSVLPEARRLVERLDARVALSLGGYAGGPVSLAARSLGVPVAILEPNSVLGLSNRLLAPIVDRAYVAFPETARALRPSTVRLFGVPLRRAFARAPYAPREGALRLLVLGGSQGALALNDVVPRAIARGRERGADLEVVHQTGRDREAAVRALYAELGLAGRARVVPFIDDVAEALAAADVVIARAGASTLAELCAVGRPSILIPYPFAADNHQLRNAQSLERASAAVAIAQGDATELRLADEIARLAAAPALRARMADAAAAFATRDAAARVAADLLELARAPRHRALRFPTLGGRAARAGEAQRGAVTNQAAPLGAGLGWEEAG.

Residues 11–13, Asn-127, Arg-168, Ser-191, Ile-248, and Gln-293 contribute to the UDP-N-acetyl-alpha-D-glucosamine site; that span reads TGG.

It belongs to the glycosyltransferase 28 family. MurG subfamily.

The protein localises to the cell inner membrane. It catalyses the reaction di-trans,octa-cis-undecaprenyl diphospho-N-acetyl-alpha-D-muramoyl-L-alanyl-D-glutamyl-meso-2,6-diaminopimeloyl-D-alanyl-D-alanine + UDP-N-acetyl-alpha-D-glucosamine = di-trans,octa-cis-undecaprenyl diphospho-[N-acetyl-alpha-D-glucosaminyl-(1-&gt;4)]-N-acetyl-alpha-D-muramoyl-L-alanyl-D-glutamyl-meso-2,6-diaminopimeloyl-D-alanyl-D-alanine + UDP + H(+). It functions in the pathway cell wall biogenesis; peptidoglycan biosynthesis. In terms of biological role, cell wall formation. Catalyzes the transfer of a GlcNAc subunit on undecaprenyl-pyrophosphoryl-MurNAc-pentapeptide (lipid intermediate I) to form undecaprenyl-pyrophosphoryl-MurNAc-(pentapeptide)GlcNAc (lipid intermediate II). The protein is UDP-N-acetylglucosamine--N-acetylmuramyl-(pentapeptide) pyrophosphoryl-undecaprenol N-acetylglucosamine transferase of Sorangium cellulosum (strain So ce56) (Polyangium cellulosum (strain So ce56)).